Here is a 210-residue protein sequence, read N- to C-terminus: MSTDAIAHEMPRLKKQYREQIRAAMQEEFGYRNPMLIPGLEKIVVNMGVGDAAHDSKVMDGAIRDITAITGQKPQVTKARKSIAQFKLREGQPIGCHVTLRGDRMWEFADRLLTLALPRIRDFRGLNSNQFDGKGNYTFGLSEQVMFLEIDQDKIVRIRGMDITFVTTAQTNEEGKALLKHLGFPFKAKDDPKKAKTKRGPAYYAKKKKK.

Positions 188–210 (AKDDPKKAKTKRGPAYYAKKKKK) are disordered. Positions 195–210 (AKTKRGPAYYAKKKKK) are enriched in basic residues.

The protein belongs to the universal ribosomal protein uL5 family. As to quaternary structure, part of the 50S ribosomal subunit; part of the 5S rRNA/L5/L18/L25 subcomplex. Contacts the 5S rRNA and the P site tRNA. Forms a bridge to the 30S subunit in the 70S ribosome.

Its function is as follows. This is one of the proteins that bind and probably mediate the attachment of the 5S RNA into the large ribosomal subunit, where it forms part of the central protuberance. In the 70S ribosome it contacts protein S13 of the 30S subunit (bridge B1b), connecting the 2 subunits; this bridge is implicated in subunit movement. Contacts the P site tRNA; the 5S rRNA and some of its associated proteins might help stabilize positioning of ribosome-bound tRNAs. This chain is Large ribosomal subunit protein uL5, found in Cutibacterium acnes (strain DSM 16379 / KPA171202) (Propionibacterium acnes).